Consider the following 249-residue polypeptide: MAMAFCPKDQYWDSSRKSCVSCALTCSQRSQRTCTDFCKFINCRKEQGRYYDHLLGACVSCDSTCTQHPQQCAHFCEKRPRSQANLQPELGRPQAGEVEVRSDNSGRHQGSEHGPGLRLSSDQLTLYCTLGVCLCAIFCCFLVALASFLRRRGEPLPSQPAGPRGSQANSPHAHRPVTEACDEVTASPQPVETCSFCFPERSSPTQESAPRSLGIHGFAGTAAPQPCMRATVGGLGVLRASTGDARPAT.

Topologically, residues 1-128 (MAMAFCPKDQ…LSSDQLTLYC (128 aa)) are extracellular. TNFR-Cys repeat units follow at residues 5–38 (FCPKDQYWDSSRKSCVSCALTCSQRSQRTCTDFC) and 42–76 (NCRKEQGRYYDHLLGACVSCDSTCTQHPQQCAHFC). Cystine bridges form between cysteine 6–cysteine 19, cysteine 22–cysteine 34, cysteine 26–cysteine 38, cysteine 43–cysteine 58, cysteine 61–cysteine 72, and cysteine 65–cysteine 76. A disordered region spans residues 86-116 (LQPELGRPQAGEVEVRSDNSGRHQGSEHGPG). Residues 98-111 (VEVRSDNSGRHQGS) show a composition bias toward basic and acidic residues. The chain crosses the membrane as a helical; Signal-anchor for type III membrane protein span at residues 129–149 (TLGVCLCAIFCCFLVALASFL). The Cytoplasmic portion of the chain corresponds to 150–249 (RRRGEPLPSQ…ASTGDARPAT (100 aa)). Residues 156-176 (LPSQPAGPRGSQANSPHAHRP) are disordered.

As to quaternary structure, binds TRAF2, TRAF5 and TRAF6. Binds the NH2-terminal domain of CAMLG with its C-terminus.

The protein localises to the membrane. Its function is as follows. Receptor for TNFSF13/APRIL and TNFSF13B/TALL1/BAFF/BLYS that binds both ligands with similar high affinity. Mediates calcineurin-dependent activation of NF-AT, as well as activation of NF-kappa-B and AP-1. Involved in the stimulation of B- and T-cell function and the regulation of humoral immunity. The polypeptide is Tumor necrosis factor receptor superfamily member 13B (Tnfrsf13b) (Mus musculus (Mouse)).